The primary structure comprises 341 residues: tRNA N6-adenosine threonylcarbamoyltransferase (341 aa).

Positions 111 and 115 each coordinate Fe cation. Substrate-binding positions include 134 to 138 (LVSGG), Asp-167, Gly-180, and Asn-276. Residue Asp-304 participates in Fe cation binding.

It belongs to the KAE1 / TsaD family. It depends on Fe(2+) as a cofactor.

Its subcellular location is the cytoplasm. The catalysed reaction is L-threonylcarbamoyladenylate + adenosine(37) in tRNA = N(6)-L-threonylcarbamoyladenosine(37) in tRNA + AMP + H(+). Required for the formation of a threonylcarbamoyl group on adenosine at position 37 (t(6)A37) in tRNAs that read codons beginning with adenine. Is involved in the transfer of the threonylcarbamoyl moiety of threonylcarbamoyl-AMP (TC-AMP) to the N6 group of A37, together with TsaE and TsaB. TsaD likely plays a direct catalytic role in this reaction. This Pseudomonas paraeruginosa (strain DSM 24068 / PA7) (Pseudomonas aeruginosa (strain PA7)) protein is tRNA N6-adenosine threonylcarbamoyltransferase.